Consider the following 446-residue polypeptide: Deoxyguanosinetriphosphate triphosphohydrolase-like protein (446 aa).

Residues 1–28 form a disordered region; that stretch reads MSSSVWQERRHGEDKQRRNDHRSPFQRD. Over residues 7 to 28 the composition is skewed to basic and acidic residues; it reads QERRHGEDKQRRNDHRSPFQRD. Residues 59 to 252 form the HD domain; it reads RLTHSLEVSQ…MELADDIAYA (194 aa).

This sequence belongs to the dGTPase family. Type 2 subfamily.

The sequence is that of Deoxyguanosinetriphosphate triphosphohydrolase-like protein from Shewanella sp. (strain MR-4).